The sequence spans 365 residues: P43 5S RNA-binding protein (365 aa).

9 consecutive C2H2-type zinc fingers follow at residues 15 to 39, 45 to 69, 75 to 100, 106 to 130, 136 to 160, 163 to 187, 191 to 213, 220 to 245, and 251 to 275; these read LRCP…MAGH, WKCG…VKRH, LSCP…LYKH, LKCF…LSVH, SVCD…QKRH, YRCS…VKKH, LQCA…KATH, LPCP…RKLH, and HRCP…LVVH.

In terms of assembly, the 42S RNP particle comprises four subunits each of which contains one molecule of 5S RNA, three molecules of tRNA, two molecules of p50 (EF1-alpha) and one molecule of the 5S RNA binding protein 43.

Its function is as follows. p43 is a 5S RNA binding protein which is a major constituent of oocytes and comprises part of a 42S ribonucleoprotein storage particle. The polypeptide is P43 5S RNA-binding protein (Xenopus laevis (African clawed frog)).